We begin with the raw amino-acid sequence, 176 residues long: Cathelicidin-2 (176 aa).

A signal peptide spans methionine 1–alanine 29. Residue glutamine 30 is modified to Pyrrolidone carboxylic acid. Positions glutamine 30–valine 130 are excised as a propeptide. Cystine bridges form between cysteine 85–cysteine 96 and cysteine 107–cysteine 124. The segment at proline 135–arginine 176 is disordered. The span at isoleucine 141–arginine 176 shows a compositional bias: pro residues. Position 173 is a proline amide (proline 173). Positions glycine 174–arginine 176 are cleaved as a propeptide — removed in mature form.

It belongs to the cathelicidin family. Post-translationally, elastase is responsible for its maturation.

It is found in the secreted. Its function is as follows. Binds to the lipid A moiety of bacterial lipopolysaccharides (LPS), a glycolipid present in the outer membrane of all Gram-negative bacteria. Shows a potent antimicrobial activity against the Gram-negative bacteria E.coli, S.typhimurium and P.aeruginosa. Less active against the Gram-positive bacteria S.aureus, L.monocytogenes and B.subtilis. This chain is Cathelicidin-2 (CATHL2), found in Capra hircus (Goat).